Reading from the N-terminus, the 203-residue chain is Sporulation delaying protein C (203 aa).

An N-terminal signal peptide occupies residues M1–A32. Positions K33–S140 are cleaved as a propeptide — removed in mature form. C141 and C147 are joined by a disulfide. The propeptide at S183–Q203 is removed in mature form.

Proprotein probably interacts with chaperone CsaA. Post-translationally, production of active SDP (able to induce SdpI and kill cells) is a multi-step process that requires signal peptide cleavage (probably by SipS or SipT) as well as SdpA and SdpB. The disulfide bond is not required for maximum toxicity.

The protein resides in the secreted. Functionally, produces a 42-residue extracellular sporulation delaying protein (SDP) that collapses the proton motive force (probably both the membrane potential and pH gradient) across the cell membrane, which leads to autolysis; may form a proton channel. Induces the lysis of other B.subtilis cells that have not entered the sporulation pathway, inducing cannibalism to provide a source of nutrients to support sporulation, and at the same time delaying commitment to the energetically expensive and irreversible onset of sporulation. Addition of SDP to liquid cultures halts growth, leads to increased cell permeability and eventually cell lysis in a significant subset of the population, although some cells survive and resume growth after a lag period. Effects of SDP are irreversible within 10 minutes. Addition of SDP to solid cultures induces killing, it is much more effective than SKF (AC O31422). Has antibiotic action against Gram-positive Firmicutes (L.acidophilus, M.megaterium, P.polymyxa, S.aureus, S.epidermidis) but not Actinobacteria M.luteus or Gram-negative P.aeruginosa or K.pneumoniae. SDP induces expression of the sdpR-sdpI operon. Its maturation is dependent on SdpA and SdpB. Also functions as a ligand, binds to SdpI triggering a signal transduction cascade that protects the cell against the toxic effects of its own SDP. This Bacillus subtilis (strain 168) protein is Sporulation delaying protein C.